Reading from the N-terminus, the 556-residue chain is Phosphoenolpyruvate-protein phosphotransferase (556 aa).

The active-site Tele-phosphohistidine intermediate is the His-186. Arg-288 and Arg-325 together coordinate phosphoenolpyruvate. Residues Glu-415 and Asp-439 each coordinate Mg(2+). Residues 438–439 (ND) and Arg-449 each bind phosphoenolpyruvate. The active-site Proton donor is the Cys-486.

This sequence belongs to the PEP-utilizing enzyme family. Homodimer. Requires Mg(2+) as cofactor.

The protein localises to the cytoplasm. It carries out the reaction L-histidyl-[protein] + phosphoenolpyruvate = N(pros)-phospho-L-histidyl-[protein] + pyruvate. Its function is as follows. General (non sugar-specific) component of the phosphoenolpyruvate-dependent sugar phosphotransferase system (sugar PTS). This major carbohydrate active-transport system catalyzes the phosphorylation of incoming sugar substrates concomitantly with their translocation across the cell membrane. Enzyme I transfers the phosphoryl group from phosphoenolpyruvate (PEP) to the phosphoryl carrier protein (HPr). This Streptomyces coelicolor (strain ATCC BAA-471 / A3(2) / M145) protein is Phosphoenolpyruvate-protein phosphotransferase (ptsI).